Reading from the N-terminus, the 240-residue chain is Agamous-like MADS-box protein AGL16 (240 aa).

Residues 1 to 61 (MGRGKIAIKR…GRLYDFSSSS (61 aa)) enclose the MADS-box domain. Positions 86-176 (IQFWQKEAAI…HKKVNLMHQQ (91 aa)) constitute a K-box domain.

In terms of assembly, homodimer. Interacts with AGL15, AGL24, AP1, AGL6, AG, AGL1, AGL11, AGL5, SEP3, SEP1, AGL63, AGL14, SOC1 and AGL21. Interacts with AGL63. Interacts with SVP. In terms of tissue distribution, expressed at high levels in leaves, moderate levels in roots, seedlings and stems, and at low levels in flowers, pollen and siliques. Accumulates in leaf guard cells and trichomes. Also present in epidermal cells of roots. Expressed in mature guard cells.

Its subcellular location is the nucleus. In terms of biological role, probable transcription factor involved in the regulation of flowering time in long-day photoperiod. Participates in the repression of FT expression and floral transition, by interacting closely with the FLC-SVP pathways. Functions in the satellite meristemoid lineage of stomatal development. This is Agamous-like MADS-box protein AGL16 (AGL16) from Arabidopsis thaliana (Mouse-ear cress).